The sequence spans 453 residues: Trigger factor (453 aa).

One can recognise a PPIase FKBP-type domain in the interval 171 to 256 (GDRVTVSFKG…ATLVEAPKDT (86 aa)).

Belongs to the FKBP-type PPIase family. Tig subfamily.

It is found in the cytoplasm. It carries out the reaction [protein]-peptidylproline (omega=180) = [protein]-peptidylproline (omega=0). In terms of biological role, involved in protein export. Acts as a chaperone by maintaining the newly synthesized protein in an open conformation. Functions as a peptidyl-prolyl cis-trans isomerase. The protein is Trigger factor of Rhodopseudomonas palustris (strain BisA53).